We begin with the raw amino-acid sequence, 87 residues long: Sec-independent protein translocase protein TatA (87 aa).

A helical membrane pass occupies residues 3-23 (IFGIGLPEMIVILVVALLIFG). Residues 61 to 87 (EGVKVSTSASEPEKVVDVSSATNTNKN) are disordered.

Belongs to the TatA/E family. As to quaternary structure, forms a complex with TatC.

It localises to the cell inner membrane. Its function is as follows. Part of the twin-arginine translocation (Tat) system that transports large folded proteins containing a characteristic twin-arginine motif in their signal peptide across membranes. TatA could form the protein-conducting channel of the Tat system. This Trichodesmium erythraeum (strain IMS101) protein is Sec-independent protein translocase protein TatA.